The chain runs to 245 residues: Orotidine 5'-phosphate decarboxylase (245 aa).

Residues D22, K44, 71–80, T131, R192, Q201, G221, and R222 contribute to the substrate site; that span reads DLKFHDIPNT. K73 (proton donor) is an active-site residue.

It belongs to the OMP decarboxylase family. Type 1 subfamily. In terms of assembly, homodimer.

It catalyses the reaction orotidine 5'-phosphate + H(+) = UMP + CO2. Its pathway is pyrimidine metabolism; UMP biosynthesis via de novo pathway; UMP from orotate: step 2/2. In terms of biological role, catalyzes the decarboxylation of orotidine 5'-monophosphate (OMP) to uridine 5'-monophosphate (UMP). The sequence is that of Orotidine 5'-phosphate decarboxylase from Yersinia pestis bv. Antiqua (strain Antiqua).